The chain runs to 203 residues: MSELTKEHFATNVYYDRTFDRDAAKILPGEYYYTGKDMLIVTVLGSCVSACIRDRVTGVGGMNHFMLPDGGGDADSPISASARYGTYAMEILINDLLKAGARRENLEAKVFGGGNVLSGFSSINVGERNAQFVRNFLKVENIRIVAEDLNDVHPRKVYYFPRNGKVLVKKLRQLNNNTLVNREQDYANRLQSGSVSGDVELFS.

Belongs to the CheD family.

The enzyme catalyses L-glutaminyl-[protein] + H2O = L-glutamyl-[protein] + NH4(+). Its function is as follows. Probably deamidates glutamine residues to glutamate on methyl-accepting chemotaxis receptors (MCPs), playing an important role in chemotaxis. This is Probable chemoreceptor glutamine deamidase CheD from Janthinobacterium sp. (strain Marseille) (Minibacterium massiliensis).